The chain runs to 63 residues: Venom peptide 2a (63 aa).

Residues 1-22 (MRGTSFILFAVVVILGFLNANA) form the signal peptide. 5 AXPX repeats span residues 22-25 (AEPL), 26-29 (ANPA), 32-35 (ANPD), 38-41 (ANPD), and 44-47 (ANPE). Residues 23-48 (EPLANPAPLANPDPLANPDPLANPEA) constitute a propeptide that is removed on maturation. Leu62 carries the leucine amide modification.

Expressed by the venom gland.

The protein localises to the secreted. It is found in the target cell membrane. Functionally, antimicrobial peptide. Shows activities against Gram-positive bacteria (S.aureus MIC=50 uM and 200 ug/ml, and B.subtilis MIC=200 ug/ml), Gram-negative bacterium E.coli (MIC=100 uM and 200 ug/ml) and fungi (B.cinerea MIC=5 uM, S.cerevisiae MIC=128 ug/ml, S.pombe MIC=128 ug/ml, A.nidulans MIC=128 ug/ml, and C.albicans MIC=64-100 uM). Shows cytolytic activity against insect cell lines. Its hemolytic activity is controversial, as Baek and colleagues report no activity while Bea and colleagues note a hemolytic activity. In vivo, peptide injection in the vicinity of the head and thorax of lepidopteran larvae induces feeding disorder followed by death due to starvation. Is weakly lethal when tested on water flies (D.magna), but is not lethal on lady beetles (H.convergens). This Eumenes pomiformis (Potter wasp) protein is Venom peptide 2a.